Here is a 128-residue protein sequence, read N- to C-terminus: Aspartate 1-decarboxylase (128 aa).

Ser25 serves as the catalytic Schiff-base intermediate with substrate; via pyruvic acid. A Pyruvic acid (Ser) modification is found at Ser25. Thr57 contacts substrate. Catalysis depends on Tyr58, which acts as the Proton donor. 73–75 lines the substrate pocket; it reads GSA.

Belongs to the PanD family. Heterooctamer of four alpha and four beta subunits. Pyruvate is required as a cofactor. Post-translationally, is synthesized initially as an inactive proenzyme, which is activated by self-cleavage at a specific serine bond to produce a beta-subunit with a hydroxyl group at its C-terminus and an alpha-subunit with a pyruvoyl group at its N-terminus.

The protein resides in the cytoplasm. It carries out the reaction L-aspartate + H(+) = beta-alanine + CO2. The protein operates within cofactor biosynthesis; (R)-pantothenate biosynthesis; beta-alanine from L-aspartate: step 1/1. Its function is as follows. Catalyzes the pyruvoyl-dependent decarboxylation of aspartate to produce beta-alanine. The chain is Aspartate 1-decarboxylase from Paraburkholderia phymatum (strain DSM 17167 / CIP 108236 / LMG 21445 / STM815) (Burkholderia phymatum).